Consider the following 83-residue polypeptide: Alpha-neurotoxin NTX-3 (83 aa).

The N-terminal stretch at 1-21 (MKTLLLTLLVVTIVCLDLGYT) is a signal peptide. 4 cysteine pairs are disulfide-bonded: Cys-24–Cys-45, Cys-38–Cys-62, Cys-64–Cys-75, and Cys-76–Cys-81.

The protein belongs to the three-finger toxin family. Short-chain subfamily. Type I alpha-neurotoxin sub-subfamily. In terms of tissue distribution, expressed by the venom gland.

The protein resides in the secreted. Functionally, binds to muscle nicotinic acetylcholine receptor (nAChR) and inhibit acetylcholine from binding to the receptor, thereby impairing neuromuscular transmission. In Naja sputatrix (Malayan spitting cobra), this protein is Alpha-neurotoxin NTX-3.